We begin with the raw amino-acid sequence, 232 residues long: Orotate phosphoribosyltransferase (232 aa).

Residues arginine 107, lysine 108, lysine 111, histidine 113, and glutamate 133–serine 141 each bind 5-phospho-alpha-D-ribose 1-diphosphate. Residue threonine 137 coordinates orotate.

This sequence belongs to the purine/pyrimidine phosphoribosyltransferase family. PyrE subfamily. Homodimer. Requires Mg(2+) as cofactor.

It carries out the reaction orotidine 5'-phosphate + diphosphate = orotate + 5-phospho-alpha-D-ribose 1-diphosphate. It participates in pyrimidine metabolism; UMP biosynthesis via de novo pathway; UMP from orotate: step 1/2. Functionally, catalyzes the transfer of a ribosyl phosphate group from 5-phosphoribose 1-diphosphate to orotate, leading to the formation of orotidine monophosphate (OMP). The chain is Orotate phosphoribosyltransferase from Agrobacterium fabrum (strain C58 / ATCC 33970) (Agrobacterium tumefaciens (strain C58)).